A 103-amino-acid chain; its full sequence is V-type ATP synthase subunit F (103 aa).

The protein belongs to the V-ATPase F subunit family.

Produces ATP from ADP in the presence of a proton gradient across the membrane. This chain is V-type ATP synthase subunit F, found in Clostridium botulinum (strain Alaska E43 / Type E3).